Here is a 256-residue protein sequence, read N- to C-terminus: Thiazole synthase (256 aa).

The active-site Schiff-base intermediate with DXP is the lysine 96. 1-deoxy-D-xylulose 5-phosphate is bound by residues glycine 157, 183-184 (AG), and 205-206 (NT).

The protein belongs to the ThiG family. As to quaternary structure, homotetramer. Forms heterodimers with either ThiH or ThiS.

It is found in the cytoplasm. The enzyme catalyses [ThiS sulfur-carrier protein]-C-terminal-Gly-aminoethanethioate + 2-iminoacetate + 1-deoxy-D-xylulose 5-phosphate = [ThiS sulfur-carrier protein]-C-terminal Gly-Gly + 2-[(2R,5Z)-2-carboxy-4-methylthiazol-5(2H)-ylidene]ethyl phosphate + 2 H2O + H(+). It functions in the pathway cofactor biosynthesis; thiamine diphosphate biosynthesis. Catalyzes the rearrangement of 1-deoxy-D-xylulose 5-phosphate (DXP) to produce the thiazole phosphate moiety of thiamine. Sulfur is provided by the thiocarboxylate moiety of the carrier protein ThiS. In vitro, sulfur can be provided by H(2)S. The chain is Thiazole synthase from Bacillus cereus (strain 03BB102).